Reading from the N-terminus, the 221-residue chain is Cytidylate kinase (221 aa).

An ATP-binding site is contributed by 11–19 (GPSGVGKST).

Belongs to the cytidylate kinase family. Type 1 subfamily.

The protein resides in the cytoplasm. The catalysed reaction is CMP + ATP = CDP + ADP. It catalyses the reaction dCMP + ATP = dCDP + ADP. The sequence is that of Cytidylate kinase from Mycoplasmopsis pulmonis (strain UAB CTIP) (Mycoplasma pulmonis).